Here is a 157-residue protein sequence, read N- to C-terminus: Small ribosomal subunit protein uS7 (157 aa).

This sequence belongs to the universal ribosomal protein uS7 family. In terms of assembly, part of the 30S ribosomal subunit. Contacts proteins S9 and S11.

Functionally, one of the primary rRNA binding proteins, it binds directly to 16S rRNA where it nucleates assembly of the head domain of the 30S subunit. Is located at the subunit interface close to the decoding center, probably blocks exit of the E-site tRNA. The polypeptide is Small ribosomal subunit protein uS7 (Koribacter versatilis (strain Ellin345)).